A 571-amino-acid polypeptide reads, in one-letter code: MNMNQVAEYVETDPTGRYGRFAEILGRGAMKTVYKAIDEKLGIEVAWSQVKLKEVLRSSVDLQRLYSEVHLLSTLNHKSIIRFYTSWIDVHNHTLNFITELFTSGTLRQYKNKYLRIDIRAIKSWARQILEGLVYLHEHDPPVIHRDLKCDNIFVNGHLGQVKIGDLGLARMLRDCHSAHSIIGTPEFMAPELYEENYNELIDVYSFGMCFLEMITSEFPYSECNHPAQIYKKVVGGKLPGAFYRVGDIEAQRFIGKCLVSASKRVSAKELLQDPFLASDESWMVYTSGAGNPKPFLNENEMDTLKLEDDELRTEMSIAGKLGAEDNKIDLEVQIAYDNGLANNVFFPFDIMNDTSIDVAKEMVKELEIIDWEPVEIAKMIDGAISSLVSDWKYEEDDETPHDHHRHRTDSFHSSSSHASSSQASLSNYMARGLQDWVQDDLHDETYSQSSSHSGSYSNLNYIAVDEYSSQSPVMSRTHNMTRFCPEESSHLQSGQANAYAASSSTNRSLASDNRTLTRNRSLVDVQRQLLHRSPGEEARKRRLFKTVGDVETVGFQSPYAVSRKPPSSRR.

The Protein kinase domain occupies glycine 19–leucine 277. ATP contacts are provided by residues threonine 99 to phenylalanine 102 and lysine 149. The active-site Proton acceptor is aspartate 166. Positions glutamate 396–serine 425 are disordered. A compositionally biased stretch (low complexity) spans phenylalanine 412–serine 425. Serine 522 carries the post-translational modification Phosphoserine.

The protein belongs to the protein kinase superfamily. Ser/Thr protein kinase family. WNK subfamily.

It catalyses the reaction L-seryl-[protein] + ATP = O-phospho-L-seryl-[protein] + ADP + H(+). The catalysed reaction is L-threonyl-[protein] + ATP = O-phospho-L-threonyl-[protein] + ADP + H(+). Its function is as follows. May regulate flowering time by modulating the photoperiod pathway. In Arabidopsis thaliana (Mouse-ear cress), this protein is Probable serine/threonine-protein kinase WNK4 (WNK4).